Here is a 396-residue protein sequence, read N- to C-terminus: Acetylornithine aminotransferase 2 (396 aa).

Residues 102–103 and phenylalanine 134 each bind pyridoxal 5'-phosphate; that span reads GA. Arginine 137 contributes to the N(2)-acetyl-L-ornithine binding site. 219–222 provides a ligand contact to pyridoxal 5'-phosphate; it reads DEVQ. An N6-(pyridoxal phosphate)lysine modification is found at lysine 248. Threonine 276 contributes to the pyridoxal 5'-phosphate binding site.

Belongs to the class-III pyridoxal-phosphate-dependent aminotransferase family. ArgD subfamily. Homodimer. Pyridoxal 5'-phosphate is required as a cofactor.

It is found in the cytoplasm. The enzyme catalyses N(2)-acetyl-L-ornithine + 2-oxoglutarate = N-acetyl-L-glutamate 5-semialdehyde + L-glutamate. The protein operates within amino-acid biosynthesis; L-arginine biosynthesis; N(2)-acetyl-L-ornithine from L-glutamate: step 4/4. The sequence is that of Acetylornithine aminotransferase 2 from Bordetella pertussis (strain Tohama I / ATCC BAA-589 / NCTC 13251).